The chain runs to 306 residues: MLFKITFLGTSGTIPSVERNSPAIFVQFGGQRMLFDCGEGTQRQMMIAKTGFRNLDNIFITHLHTDHFIGLFGLIETMSLNERSRELNVYSPRAEVLRALFEAFGYDQLNYDIRVRELKDGEEVKFDGFKVVAFRTEHIVKSVGYAIIENDRRGKFNREKAEKELGIPPGPLYAKLARGESIVWKGRTITPDMVLGEKRRGRKVVYTGDSRPTKRTVEIARNADILIHDASFKEELKDWAIESGHSTAKEAAEVAREANVKKLILTHISTRYSKDASPLLEEAKKVFENTIIAEDFMSLEVTFDES.

Residues His-62, His-64, Asp-66, His-67, His-138, Asp-209, and His-267 each coordinate Zn(2+). The active-site Proton acceptor is Asp-66.

This sequence belongs to the RNase Z family. Homodimer. Requires Zn(2+) as cofactor.

The catalysed reaction is Endonucleolytic cleavage of RNA, removing extra 3' nucleotides from tRNA precursor, generating 3' termini of tRNAs. A 3'-hydroxy group is left at the tRNA terminus and a 5'-phosphoryl group is left at the trailer molecule.. Its function is as follows. Zinc phosphodiesterase, which displays some tRNA 3'-processing endonuclease activity. Probably involved in tRNA maturation, by removing a 3'-trailer from precursor tRNA. This chain is Ribonuclease Z, found in Archaeoglobus fulgidus (strain ATCC 49558 / DSM 4304 / JCM 9628 / NBRC 100126 / VC-16).